We begin with the raw amino-acid sequence, 263 residues long: Hydroxyethylthiazole kinase 2 (263 aa).

A substrate-binding site is contributed by methionine 42. ATP is bound by residues lysine 118 and threonine 164. Glycine 191 is a substrate binding site.

Belongs to the Thz kinase family. Requires Mg(2+) as cofactor.

It carries out the reaction 5-(2-hydroxyethyl)-4-methylthiazole + ATP = 4-methyl-5-(2-phosphooxyethyl)-thiazole + ADP + H(+). Its pathway is cofactor biosynthesis; thiamine diphosphate biosynthesis; 4-methyl-5-(2-phosphoethyl)-thiazole from 5-(2-hydroxyethyl)-4-methylthiazole: step 1/1. Functionally, catalyzes the phosphorylation of the hydroxyl group of 4-methyl-5-beta-hydroxyethylthiazole (THZ). The polypeptide is Hydroxyethylthiazole kinase 2 (Clostridium botulinum (strain Loch Maree / Type A3)).